We begin with the raw amino-acid sequence, 95 residues long: Co-chaperonin GroES (95 aa).

Belongs to the GroES chaperonin family. In terms of assembly, heptamer of 7 subunits arranged in a ring. Interacts with the chaperonin GroEL.

Its subcellular location is the cytoplasm. Its function is as follows. Together with the chaperonin GroEL, plays an essential role in assisting protein folding. The GroEL-GroES system forms a nano-cage that allows encapsulation of the non-native substrate proteins and provides a physical environment optimized to promote and accelerate protein folding. GroES binds to the apical surface of the GroEL ring, thereby capping the opening of the GroEL channel. The chain is Co-chaperonin GroES from Geobacter metallireducens (strain ATCC 53774 / DSM 7210 / GS-15).